We begin with the raw amino-acid sequence, 244 residues long: Diablo homolog, mitochondrial (244 aa).

A mitochondrion-targeting transit peptide spans 1–38 (MASLPRRLIWSFSYILRESFPIVSRRNCVSLLRASWRK). The IAP-binding signature appears at 50–54 (AIPVG). A compositionally biased stretch (basic and acidic residues) spans 207 to 218 (DEIKRTITEDKG). The disordered stretch occupies residues 207-244 (DEIKRTITEDKGNPPSGGSPRSSLSEEEEIPEAYLRED). Residues 220–229 (PPSGGSPRSS) are compositionally biased toward low complexity.

Belongs to the Smac/DIABLO protein family. As to quaternary structure, homodimer.

The protein localises to the mitochondrion. Functionally, promotes apoptosis. Acts by opposing the inhibitory activity of inhibitor of apoptosis proteins (IAP). The protein is Diablo homolog, mitochondrial of Xenopus tropicalis (Western clawed frog).